A 620-amino-acid chain; its full sequence is Cilia- and flagella-associated protein 52 (620 aa).

WD repeat units lie at residues 62–106, 109–150, 156–195, 203–242, 288–327, 330–369, 372–411, 415–454, 459–498, 500–539, 543–582, and 585–620; these read GHSN…LMAR, LHKG…AICG, LNVG…RKIW, QMKR…LADT, QLQG…ETLV, CHFE…ELLR, VPNM…LMYV, AHRI…QKLE, EHKS…RNQM, LANT…GIRE, SLSG…VTHV, and GHSG…PFPS.

It belongs to the CFAP52 family. As to quaternary structure, microtubule inner protein component of sperm flagellar doublet microtubules. Interacts with BRCA2. Interacts with the CCT chaperonin complex. Interacts with HSP70. Interacts with AK8. Interacts with CFAP45. Interacts with DNAI1. Interacts with IQDC. In terms of tissue distribution, expressed in respiratory cells and sperm (at protein level).

Its subcellular location is the cytoplasm. It localises to the cytoskeleton. The protein localises to the cilium axoneme. It is found in the flagellum axoneme. In terms of biological role, microtubule inner protein (MIP) part of the dynein-decorated doublet microtubules (DMTs) in cilia axoneme. Important for proper ciliary and flagellar beating. May act in cooperation with CFAP45 and axonemal dynein subunit DNAH11. May play a role in cell growth and/or survival. This is Cilia- and flagella-associated protein 52 (CFAP52) from Sus scrofa (Pig).